The primary structure comprises 393 residues: tRNA-specific 2-thiouridylase MnmA (393 aa).

ATP is bound by residues 19–26 (AMSGGVDS) and Leu45. Cys113 functions as the Nucleophile in the catalytic mechanism. Cys113 and Cys210 are oxidised to a cystine. Gly137 lines the ATP pocket. Residues 160–162 (RDQ) are interaction with tRNA. Cys210 acts as the Cysteine persulfide intermediate in catalysis.

Belongs to the MnmA/TRMU family.

It localises to the cytoplasm. It catalyses the reaction S-sulfanyl-L-cysteinyl-[protein] + uridine(34) in tRNA + AH2 + ATP = 2-thiouridine(34) in tRNA + L-cysteinyl-[protein] + A + AMP + diphosphate + H(+). Functionally, catalyzes the 2-thiolation of uridine at the wobble position (U34) of tRNA, leading to the formation of s(2)U34. In Afipia carboxidovorans (strain ATCC 49405 / DSM 1227 / KCTC 32145 / OM5) (Oligotropha carboxidovorans), this protein is tRNA-specific 2-thiouridylase MnmA.